The sequence spans 423 residues: Flavohemoprotein B (423 aa).

The Globin domain maps to 1–136 (MLSQKSIQII…VAQAFMDAEE (136 aa)). Histidine 83 is a binding site for heme b. Catalysis depends on charge relay system residues tyrosine 93 and glutamate 135. Residues 149–423 (WKDTREFVVD…LRGVKNIIEN (275 aa)) are reductase. Residues 150–268 (KDTREFVVDR…SVPAGDFVVN (119 aa)) form the FAD-binding FR-type domain. Residues tyrosine 188 and 212 to 215 (RHYS) contribute to the FAD site. An NADP(+)-binding site is contributed by 281-286 (GVGINP). 400–403 (LFGP) provides a ligand contact to FAD.

This sequence belongs to the globin family. Two-domain flavohemoproteins subfamily. The protein in the C-terminal section; belongs to the flavoprotein pyridine nucleotide cytochrome reductase family. FAD is required as a cofactor. Requires heme b as cofactor.

The protein resides in the cytoplasm. The enzyme catalyses 2 nitric oxide + NADPH + 2 O2 = 2 nitrate + NADP(+) + H(+). It catalyses the reaction 2 nitric oxide + NADH + 2 O2 = 2 nitrate + NAD(+) + H(+). Functionally, is involved in NO detoxification in an aerobic process, termed nitric oxide dioxygenase (NOD) reaction that utilizes O(2) and NAD(P)H to convert NO to nitrate, which protects the cell from various noxious nitrogen compounds. Therefore, plays a central role in the inducible response to nitrosative stress. In the presence of oxygen and NADH, it has NADH oxidase activity, which leads to the generation of superoxide and H(2)O(2). Under anaerobic conditions, it also exhibits nitric oxide reductase and FAD reductase activities. However, all these reactions are much lower than NOD activity. The polypeptide is Flavohemoprotein B (fhbB) (Dictyostelium discoideum (Social amoeba)).